A 327-amino-acid polypeptide reads, in one-letter code: Probable pectinesterase A (327 aa).

The first 19 residues, 1-19 (MHTPYLLGALAALAATAVG), serve as a signal peptide directing secretion. N-linked (GlcNAc...) asparagine glycosylation occurs at N84. Position 145 (Q145) interacts with substrate. D168 acts as the Proton donor in catalysis. The Nucleophile role is filled by D189. Substrate contacts are provided by R249 and W251. The N-linked (GlcNAc...) asparagine glycan is linked to N288.

The protein belongs to the pectinesterase family.

Its subcellular location is the secreted. It catalyses the reaction [(1-&gt;4)-alpha-D-galacturonosyl methyl ester](n) + n H2O = [(1-&gt;4)-alpha-D-galacturonosyl](n) + n methanol + n H(+). It participates in glycan metabolism; pectin degradation; 2-dehydro-3-deoxy-D-gluconate from pectin: step 1/5. Its function is as follows. Involved in maceration and soft-rotting of plant tissue. The polypeptide is Probable pectinesterase A (pmeA) (Aspergillus niger (strain ATCC MYA-4892 / CBS 513.88 / FGSC A1513)).